Reading from the N-terminus, the 505-residue chain is RNA-splicing ligase RtcB homolog (505 aa).

Mn(2+) contacts are provided by Asp119, Cys122, His227, His259, and His353. 226–230 contacts GMP; it reads NHYGE. GMP is bound by residues 353 to 354, 402 to 405, Ser409, 428 to 431, and Lys504; these read HN, GGTM, and HGAG. His428 (GMP-histidine intermediate) is an active-site residue.

Belongs to the RtcB family. As to quaternary structure, catalytic component of the tRNA-splicing ligase complex. Mn(2+) is required as a cofactor.

It carries out the reaction a 3'-end 3'-phospho-ribonucleotide-RNA + a 5'-end dephospho-ribonucleoside-RNA + GTP = a ribonucleotidyl-ribonucleotide-RNA + GMP + diphosphate. The catalysed reaction is a 3'-end 2',3'-cyclophospho-ribonucleotide-RNA + a 5'-end dephospho-ribonucleoside-RNA + GTP + H2O = a ribonucleotidyl-ribonucleotide-RNA + GMP + diphosphate + H(+). Catalytic subunit of the tRNA-splicing ligase complex that acts by directly joining spliced tRNA halves to mature-sized tRNAs by incorporating the precursor-derived splice junction phosphate into the mature tRNA as a canonical 3',5'-phosphodiester. May act as an RNA ligase with broad substrate specificity, and may function toward other RNAs. The chain is RNA-splicing ligase RtcB homolog from Brugia malayi (Filarial nematode worm).